We begin with the raw amino-acid sequence, 251 residues long: Triosephosphate isomerase (251 aa).

9–11 serves as a coordination point for substrate; the sequence is NWK. Residue His-94 is the Electrophile of the active site. Glu-166 (proton acceptor) is an active-site residue. Residues Gly-172, Ser-211, and 232 to 233 each bind substrate; that span reads GG.

Belongs to the triosephosphate isomerase family. In terms of assembly, homodimer.

It is found in the cytoplasm. It catalyses the reaction D-glyceraldehyde 3-phosphate = dihydroxyacetone phosphate. Its pathway is carbohydrate biosynthesis; gluconeogenesis. The protein operates within carbohydrate degradation; glycolysis; D-glyceraldehyde 3-phosphate from glycerone phosphate: step 1/1. Its function is as follows. Involved in the gluconeogenesis. Catalyzes stereospecifically the conversion of dihydroxyacetone phosphate (DHAP) to D-glyceraldehyde-3-phosphate (G3P). This chain is Triosephosphate isomerase, found in Stenotrophomonas maltophilia (strain K279a).